Reading from the N-terminus, the 295-residue chain is MAAIIDGKAIAAAIRAEVAAGVTALTAEGGAAPGLAVVLVGEDPASLVYVGRKIAQTRQAGIRSFEHRLPAGTGEADLLGLIERLNRDDEVHGILVQLPLPRHIRADRVLDAIDPLKDVDGFHPVNVGRLSIGTDGLVPCTPLGCMLLLETVIDDFRGLKAVVIGKSNIVGKPVAMLLLERECTVTVTHILTRNLPDIVRTADIVVVAAGSPGLVRGDWVRPGAVVIDVGINRIGEPGKDSRLVGDAAFDELGHAAAITPVPGGVGPMTVACLLRNTLVAARRQQGADASPKKGA.

NADP(+)-binding positions include glycine 165–serine 167, isoleucine 190, and isoleucine 231.

This sequence belongs to the tetrahydrofolate dehydrogenase/cyclohydrolase family. Homodimer.

It catalyses the reaction (6R)-5,10-methylene-5,6,7,8-tetrahydrofolate + NADP(+) = (6R)-5,10-methenyltetrahydrofolate + NADPH. The enzyme catalyses (6R)-5,10-methenyltetrahydrofolate + H2O = (6R)-10-formyltetrahydrofolate + H(+). It participates in one-carbon metabolism; tetrahydrofolate interconversion. Functionally, catalyzes the oxidation of 5,10-methylenetetrahydrofolate to 5,10-methenyltetrahydrofolate and then the hydrolysis of 5,10-methenyltetrahydrofolate to 10-formyltetrahydrofolate. The protein is Bifunctional protein FolD 1 of Rhizorhabdus wittichii (strain DSM 6014 / CCUG 31198 / JCM 15750 / NBRC 105917 / EY 4224 / RW1) (Sphingomonas wittichii).